The chain runs to 785 residues: MGSEPRFEPRPELIDLPVLQKFKLYATPSNFYLIGRDENKSFRRILKIDRRDQNELNLFEDPTRYTKDEMRELKRRMIVGNEESGGFKAITTCYGIIGFVRFLEPYYMLLITKRKKVGEICGHTVYGIAESQMIAIPHPSIQSKVAKSEAELRYKKLLSVVDLSKNFYFSYTYHLMYSLQKNIGNTERGNPHDNTMFVWNSFLTREIRKILQNSIWTVALIYGFFQQTKCSVSGEKFVFTIIARRSRHYAGTRYLRRGVNDIGRVANDVETEQIVSKVVPAGQKIPITSVVQVRGSIPLFWSQEASVFNPQPEIILNKKDANYEATQHHFQNLRQRYGNRIIILNLLKTVTGEKKHRETILRGEFAKTIRFINKGMDREHRLKAIHFDLSKHYKKGADGAFNHLCIFSRKSLELTDLFYCKAPSGVGAEEVIYDSFFNNPIPSQDEEASSPEKEDMKADIFLLQNGVLRTNCIDCLDRTNFAQYAHGLVSLGHQLRTLGISGPPVVDLNNPLAIELMDAYQKMGNTLAMQYGGSEAHSKMFCDLRGNWNMVMRQRDIFTAVRRYYSNAYQDSDKQNAINVFLGHFRPRLGRPALWELDSDQHNIGRSGSNLDIENMRPLIRRSFSDNIIMDCDLNLEELVRENSQPTYEGLNGGVSGTNLEFPFYETEPASLSFLSVMRNEELMRETGSGQMFQGSSSNSDSHRPNDIPGFSHSYVTKFTPAEDIFERGSSKSVSSDNLFTDRDESVTSLTNTNSSFEFPIMGGSDLLPGFSNAFARWVFSARAW.

An SAC domain is found at Leu158–Gly533. A Phosphatase catalytic core motif is present at residues Arg469–Asn480. Over residues Gly688–Ser700 the composition is skewed to polar residues. The disordered stretch occupies residues Gly688–Asp707.

Component of the PI(3,5)P2 regulatory complex at least composed of ATG18, SAC/FIG4, FAB1 and VAC14. Mg(2+) serves as cofactor. Ubiquitous with a higher level of expression in young seedlings than in other tissues.

The protein localises to the vacuole membrane. It carries out the reaction a 1,2-diacyl-sn-glycero-3-phospho-(1D-myo-inositol-3,5-bisphosphate) + H2O = a 1,2-diacyl-sn-glycero-3-phospho-(1D-myo-inositol-3-phosphate) + phosphate. The PI(3,5)P2 regulatory complex regulates both the synthesis and turnover of phosphatidylinositol 3,5-bisphosphate (PtdIns(3,5)P2). The sequence is that of Phosphoinositide phosphatase SAC5 (SAC5) from Arabidopsis thaliana (Mouse-ear cress).